The following is a 318-amino-acid chain: GTP cyclohydrolase MptA (318 aa).

The protein belongs to the GTP cyclohydrolase IV family. Homodimer. Fe(2+) serves as cofactor.

It catalyses the reaction GTP + H2O = 7,8-dihydroneopterin 2',3'-cyclic phosphate + formate + diphosphate + H(+). It participates in cofactor biosynthesis; 5,6,7,8-tetrahydromethanopterin biosynthesis. Functionally, converts GTP to 7,8-dihydro-D-neopterin 2',3'-cyclic phosphate, the first intermediate in the biosynthesis of coenzyme methanopterin. This Methanothermobacter thermautotrophicus (strain ATCC 29096 / DSM 1053 / JCM 10044 / NBRC 100330 / Delta H) (Methanobacterium thermoautotrophicum) protein is GTP cyclohydrolase MptA.